The chain runs to 158 residues: S-ribosylhomocysteine lyase (158 aa).

Fe cation-binding residues include His54, His58, and Cys124.

This sequence belongs to the LuxS family. In terms of assembly, homodimer. Fe cation serves as cofactor.

It catalyses the reaction S-(5-deoxy-D-ribos-5-yl)-L-homocysteine = (S)-4,5-dihydroxypentane-2,3-dione + L-homocysteine. Involved in the synthesis of autoinducer 2 (AI-2) which is secreted by bacteria and is used to communicate both the cell density and the metabolic potential of the environment. The regulation of gene expression in response to changes in cell density is called quorum sensing. Catalyzes the transformation of S-ribosylhomocysteine (RHC) to homocysteine (HC) and 4,5-dihydroxy-2,3-pentadione (DPD). This Limosilactobacillus reuteri (Lactobacillus reuteri) protein is S-ribosylhomocysteine lyase.